Here is a 477-residue protein sequence, read N- to C-terminus: MRDYREFYIDGQWVRPKGAREAEVINPATEKIVGLISLGTEEHVDLAVRAARRAFDGWSRTSKDQRLELLEQVCRAFESKLDEIAKAITEEMGAPLVQLALPLQAPAGLGHFLTAASILRDYDFEESLGTTRVVREPAGVCGLITPWNWPLNQIAAKVAPALAAGCTMVLKPSEIAPFSAYLLARIFDEVGVPPGVFNLVNGDGPGVGAPLAAHPEVDLVSFTGSTRAGTLVSTAAAPTVKRVALELGGKSANIILDDADLETAVKHGVRTMMLNTGQSCNAPSRMLVPLSKLDEVEHLAEHFCKEIVVGDPMHSDTNIGPLASGMQYEKVQDCIRQGVAEGAKLICGGLGRPDGLESGYFAQPTIFSAVNKQMYIAREEIFGPVLCIMPYGDENEAIQIANDSCYGLSGYVSSGSLERARNVAKQLRTGAVHLNGAALDFTAPFGGYKQSGNGREWGKYGFEEFLEIKAVMGYEGS.

Position 202 to 208 (202 to 208 (GDGPGVG)) interacts with NAD(+). Catalysis depends on residues Glu246 and Cys280.

It belongs to the aldehyde dehydrogenase family.

It carries out the reaction 4-oxo-4-(pyridin-3-yl)butanal + NADP(+) + H2O = 4-oxo-4-(pyridin-3-yl)butanoate + NADPH + 2 H(+). It participates in alkaloid degradation; nicotine degradation. Catalyzes the dehydrogenation of 3-succinoylsemialdehyde-pyridine to 3-succinoyl-pyridine in the nicotine degradation pathway. The polypeptide is 3-succinoylsemialdehyde-pyridine dehydrogenase (ald) (Pseudomonas sp).